The following is a 101-amino-acid chain: uncharacterized protein (101 aa).

A helical transmembrane segment spans residues 70–90 (VLFIPIILLLPPSCPLTGVTV).

Its subcellular location is the membrane. This is an uncharacterized protein from Saccharomyces cerevisiae (strain ATCC 204508 / S288c) (Baker's yeast).